A 466-amino-acid polypeptide reads, in one-letter code: Ras-GEF domain-containing family member 1C (466 aa).

Disordered regions lie at residues 1–35 and 443–466; these read MPRTLTASDMVTPGSLSPPPTESTEGEQAGQPLLD and SESPESQTEKERWKSLRSSILGKT. The region spanning 34-164 is the N-terminal Ras-GEF domain; sequence LDGAPSSASL…LLQTLHQKLA (131 aa). Residues 200-446 enclose the Ras-GEF domain; it reads DPYTLAQQLT…YLASYESESP (247 aa).

Its function is as follows. Guanine nucleotide exchange factor (GEF). The polypeptide is Ras-GEF domain-containing family member 1C (Rasgef1c) (Mus musculus (Mouse)).